Here is a 508-residue protein sequence, read N- to C-terminus: Aldehyde dehydrogenase (508 aa).

Catalysis depends on residues Glu264 and Cys303.

The protein belongs to the aldehyde dehydrogenase family.

The catalysed reaction is acetaldehyde + NAD(+) + H2O = acetate + NADH + 2 H(+). The protein operates within organosulfur degradation. Its function is as follows. Catalyzes the NAD(+)-dependent oxidation of acetaldehyde to acetate. This is Aldehyde dehydrogenase from Paracoccus denitrificans (strain Pd 1222).